Consider the following 337-residue polypeptide: Anthranilate phosphoribosyltransferase (337 aa).

Residues glycine 79, 82–83 (GD), threonine 87, 89–92 (NVST), 107–115 (KHGNRSVSS), and serine 119 contribute to the 5-phospho-alpha-D-ribose 1-diphosphate site. Glycine 79 lines the anthranilate pocket. Serine 91 provides a ligand contact to Mg(2+). Asparagine 110 contributes to the anthranilate binding site. Arginine 165 contributes to the anthranilate binding site. Aspartate 223 and glutamate 224 together coordinate Mg(2+).

The protein belongs to the anthranilate phosphoribosyltransferase family. In terms of assembly, homodimer. Mg(2+) serves as cofactor.

The catalysed reaction is N-(5-phospho-beta-D-ribosyl)anthranilate + diphosphate = 5-phospho-alpha-D-ribose 1-diphosphate + anthranilate. It participates in amino-acid biosynthesis; L-tryptophan biosynthesis; L-tryptophan from chorismate: step 2/5. Its function is as follows. Catalyzes the transfer of the phosphoribosyl group of 5-phosphorylribose-1-pyrophosphate (PRPP) to anthranilate to yield N-(5'-phosphoribosyl)-anthranilate (PRA). The sequence is that of Anthranilate phosphoribosyltransferase from Aeromonas salmonicida (strain A449).